The following is a 242-amino-acid chain: Small ribosomal subunit protein uS2 (242 aa).

The protein belongs to the universal ribosomal protein uS2 family.

This chain is Small ribosomal subunit protein uS2, found in Idiomarina loihiensis (strain ATCC BAA-735 / DSM 15497 / L2-TR).